Here is a 177-residue protein sequence, read N- to C-terminus: uncharacterized protein (177 aa).

Residues 1–27 form a disordered region; the sequence is MSHSRRAAPTQDQCHTPGFPTSRETSG.

This is an uncharacterized protein from Homo sapiens (Human).